We begin with the raw amino-acid sequence, 523 residues long: 2-isopropylmalate synthase (523 aa).

A Pyruvate carboxyltransferase domain is found at 5-267 (VIIFDTTLRD…HTNINHHEIW (263 aa)). 4 residues coordinate Mn(2+): D14, H202, H204, and N238. The interval 392-523 (RLDYFSVQSG…QNKENNKETV (132 aa)) is regulatory domain.

This sequence belongs to the alpha-IPM synthase/homocitrate synthase family. LeuA type 1 subfamily. Homodimer. It depends on Mn(2+) as a cofactor.

It is found in the cytoplasm. It carries out the reaction 3-methyl-2-oxobutanoate + acetyl-CoA + H2O = (2S)-2-isopropylmalate + CoA + H(+). It participates in amino-acid biosynthesis; L-leucine biosynthesis; L-leucine from 3-methyl-2-oxobutanoate: step 1/4. Catalyzes the condensation of the acetyl group of acetyl-CoA with 3-methyl-2-oxobutanoate (2-ketoisovalerate) to form 3-carboxy-3-hydroxy-4-methylpentanoate (2-isopropylmalate). This is 2-isopropylmalate synthase from Salmonella choleraesuis (strain SC-B67).